Consider the following 420-residue polypeptide: Putative sporulation-specific glycosylase YdhD (420 aa).

2 consecutive LysM domains span residues 2-45 (FIHI…ALLI) and 48-92 (YVYT…KITI). The GH18 domain occupies 100–420 (AGTLSFYVLR…LRKFFTIRKV (321 aa)). The active-site Proton donor is E212.

Belongs to the glycosyl hydrolase 18 family. Chitinase class II subfamily.

Its subcellular location is the spore wall. This Bacillus subtilis (strain 168) protein is Putative sporulation-specific glycosylase YdhD (ydhD).